A 605-amino-acid polypeptide reads, in one-letter code: Dolichyl-diphosphooligosaccharide--protein glycosyltransferase subunit 1 (605 aa).

Residues 1-22 (MEAPIVLLLLLWLALAPTPGSA) form the signal peptide. The Lumenal portion of the chain corresponds to 23–437 (SSEAPPLVNE…FNKVLMLQEP (415 aa)). K185 bears the N6-acetyllysine mark. N297 is a glycosylation site (N-linked (GlcNAc...) asparagine). Residues 438–455 (LLVVAAFYILFFTVIIYV) traverse the membrane as a helical segment. Topologically, residues 456-605 (RLDFSITKDP…TKIDHILDAL (150 aa)) are cytoplasmic. N6-acetyllysine; alternate is present on K536. K536 is covalently cross-linked (Glycyl lysine isopeptide (Lys-Gly) (interchain with G-Cter in SUMO2); alternate).

It belongs to the OST1 family. As to quaternary structure, component of the oligosaccharyltransferase (OST) complex. OST exists in two different complex forms which contain common core subunits RPN1, RPN2, OST48, OST4, DAD1 and TMEM258, either STT3A or STT3B as catalytic subunits, and form-specific accessory subunits. STT3A complex assembly occurs through the formation of 3 subcomplexes. Subcomplex 1 contains RPN1 and TMEM258, subcomplex 2 contains the STT3A-specific subunits STT3A, DC2/OSTC, and KCP2 as well as the core subunit OST4, and subcomplex 3 contains RPN2, DAD1, and OST48. The STT3A complex can form stable complexes with the Sec61 complex or with both the Sec61 and TRAP complexes. Interacts with TMEM35A/NACHO. Ubiquitinated by the ECS(ASB11) complex. Post-translationally, ufmylated by UFL1 in response to endoplasmic reticulum stress, promoting reticulophagy of endoplasmic reticulum sheets. In terms of tissue distribution, expressed in all tissues tested.

The protein resides in the endoplasmic reticulum membrane. Its pathway is protein modification; protein glycosylation. Subunit of the oligosaccharyl transferase (OST) complex that catalyzes the initial transfer of a defined glycan (Glc(3)Man(9)GlcNAc(2) in eukaryotes) from the lipid carrier dolichol-pyrophosphate to an asparagine residue within an Asn-X-Ser/Thr consensus motif in nascent polypeptide chains, the first step in protein N-glycosylation. N-glycosylation occurs cotranslationally and the complex associates with the Sec61 complex at the channel-forming translocon complex that mediates protein translocation across the endoplasmic reticulum (ER). All subunits are required for a maximal enzyme activity. In Rattus norvegicus (Rat), this protein is Dolichyl-diphosphooligosaccharide--protein glycosyltransferase subunit 1.